The chain runs to 190 residues: RING finger protein 227 (190 aa).

The RING-type zinc-finger motif lies at 18-81 (CNICYRPFNL…RRVVTCPFCR (64 aa)). A disordered region spans residues 111 to 145 (KCERDEAGNPAKESSDADGEAEEEGESEKGAGPRS). The segment covering 126–136 (DADGEAEEEGE) has biased composition (acidic residues).

This chain is RING finger protein 227, found in Homo sapiens (Human).